The sequence spans 308 residues: Palmitoyltransferase ZDHHC7 (308 aa).

Residues Met1–Cys50 are Cytoplasmic-facing. Residues Ala51–Leu71 traverse the membrane as a helical segment. The Lumenal segment spans residues Pro72–Asp75. Residues Phe76 to Ser96 form a helical membrane-spanning segment. Residues His97–Arg173 are Cytoplasmic-facing. One can recognise a DHHC domain in the interval Tyr130–Met180. The active-site S-palmitoyl cysteine intermediate is the Cys160. A helical membrane pass occupies residues Phe174–Gly194. At Leu195–Val217 the chain is on the lumenal side. Residues Ile218–Phe238 form a helical membrane-spanning segment. Residues Gly239 to Val308 lie on the Cytoplasmic side of the membrane.

The protein belongs to the DHHC palmitoyltransferase family. As to quaternary structure, homooligomers. Heterooligomers with ZDHHC3. In terms of processing, autopalmitoylated. As to expression, ubiquitously expressed, with highest levels in liver, kidney and brain. Expressed in all brain regions.

The protein resides in the golgi apparatus membrane. It carries out the reaction L-cysteinyl-[protein] + hexadecanoyl-CoA = S-hexadecanoyl-L-cysteinyl-[protein] + CoA. The catalysed reaction is L-cysteinyl-[protein] + tetradecanoyl-CoA = S-tetradecanoyl-L-cysteinyl-[protein] + CoA. It catalyses the reaction L-cysteinyl-[protein] + octadecanoyl-CoA = S-octadecanoyl-L-cysteinyl-[protein] + CoA. Functionally, golgi-localized palmitoyltransferase that catalyzes the addition of palmitate onto various protein substrates and therefore functions in several unrelated biological processes. Has no stringent fatty acid selectivity and in addition to palmitate can also transfer onto target proteins myristate from tetradecanoyl-CoA and stearate from octadecanoyl-CoA. Palmitoylates sex steroid hormone receptors, including ESR1, PGR and AR, thereby regulating their targeting to the plasma membrane and their function in rapid intracellular signaling upon binding of sex hormones. Palmitoylates GNAQ, a heterotrimeric G protein, regulating its dynamic localization at the plasma membrane and is thereby involved in GNAQ-dependent G protein-coupled receptor signaling pathways. Also functions in ligand-induced cell death by regulating the FAS signaling pathway through the palmitoylation and stabilization of the receptor at the plasma membrane. In epithelial cells, palmitoylates SCRIB and regulates its localization to the plasma membrane, regulating indirectly cell polarity and differentiation. Also palmitoylates JAM3 and promotes its expression at tight junctions and regulates its function in cell migration. Palmitoylates the glucose transporter GLUT4/SLC2A4 and controls the insulin-dependent translocation of GLUT4 to the plasma membrane. In brain, could also palmitoylate SNAP25 and DLG4/PSD95. Could also palmitoylate DNAJC5 and regulate its localization to the Golgi membrane. Could also palmitoylate NCDN. May play a role in follicle stimulation hormone (FSH) activation of testicular Sertoli cells. Activates pyroptosis by catalyzing palmitoylation of gasdermin-D (GSDMD). The polypeptide is Palmitoyltransferase ZDHHC7 (Mus musculus (Mouse)).